The sequence spans 435 residues: Xylose isomerase (435 aa).

2 residues coordinate Mg(2+): D306 and D308.

This sequence belongs to the xylose isomerase family. Homotetramer. Mg(2+) is required as a cofactor.

The protein resides in the cytoplasm. It carries out the reaction alpha-D-xylose = alpha-D-xylulofuranose. The chain is Xylose isomerase from Allorhizobium ampelinum (strain ATCC BAA-846 / DSM 112012 / S4) (Agrobacterium vitis (strain S4)).